Here is a 600-residue protein sequence, read N- to C-terminus: NADH-quinone oxidoreductase subunit C/D (600 aa).

The interval 1–190 (MVNNMTDLTA…DPFELTKAKQ (190 aa)) is NADH dehydrogenase I subunit C. The NADH dehydrogenase I subunit D stretch occupies residues 214–600 (DFMFLNLGPN…IDFVMSDVDR (387 aa)).

In the N-terminal section; belongs to the complex I 30 kDa subunit family. It in the C-terminal section; belongs to the complex I 49 kDa subunit family. NDH-1 is composed of 13 different subunits. Subunits NuoB, CD, E, F, and G constitute the peripheral sector of the complex.

Its subcellular location is the cell inner membrane. The catalysed reaction is a quinone + NADH + 5 H(+)(in) = a quinol + NAD(+) + 4 H(+)(out). NDH-1 shuttles electrons from NADH, via FMN and iron-sulfur (Fe-S) centers, to quinones in the respiratory chain. The immediate electron acceptor for the enzyme in this species is believed to be ubiquinone. Couples the redox reaction to proton translocation (for every two electrons transferred, four hydrogen ions are translocated across the cytoplasmic membrane), and thus conserves the redox energy in a proton gradient. The chain is NADH-quinone oxidoreductase subunit C/D from Salmonella paratyphi C (strain RKS4594).